The primary structure comprises 831 residues: Zinc phosphodiesterase ELAC protein 2 (831 aa).

Residues 1–16 (MWALRSLLRPLGLRTM) constitute a mitochondrion transit peptide. Disordered regions lie at residues 15–47 (TMSQ…PGGP) and 179–227 (SERR…ANRK). Residues 186–212 (QQPSQSPRTSPNRLSPKQSSDSGSAEN) show a composition bias toward polar residues. Phosphoserine occurs at positions 191, 195, 200, 204, and 732. The tract at residues 791–831 (LTQQADSPEDREPQQKRAHTDEPHSPQSKKESVANTLGARV) is disordered. Position 792 is a phosphothreonine (Thr-792). 2 positions are modified to phosphoserine: Ser-797 and Ser-815. The segment covering 798-822 (PEDREPQQKRAHTDEPHSPQSKKES) has biased composition (basic and acidic residues).

The protein belongs to the RNase Z family. As to quaternary structure, homodimer. Interacts with PTCD1. Zn(2+) is required as a cofactor.

It is found in the mitochondrion. It localises to the mitochondrion matrix. Its subcellular location is the mitochondrion nucleoid. The protein resides in the nucleus. The enzyme catalyses Endonucleolytic cleavage of RNA, removing extra 3' nucleotides from tRNA precursor, generating 3' termini of tRNAs. A 3'-hydroxy group is left at the tRNA terminus and a 5'-phosphoryl group is left at the trailer molecule.. In terms of biological role, zinc phosphodiesterase, which displays mitochondrial tRNA 3'-processing endonuclease activity. Involved in tRNA maturation, by removing a 3'-trailer from precursor tRNA. Associates with mitochondrial DNA complexes at the nucleoids to initiate RNA processing and ribosome assembly. The chain is Zinc phosphodiesterase ELAC protein 2 (Elac2) from Mus musculus (Mouse).